We begin with the raw amino-acid sequence, 237 residues long: LexA repressor (237 aa).

Residues 26–46 (FDEMKEALDLRSKSGIHRLIT) constitute a DNA-binding region (H-T-H motif). Catalysis depends on for autocatalytic cleavage activity residues serine 158 and lysine 196.

The protein belongs to the peptidase S24 family. As to quaternary structure, homodimer.

It catalyses the reaction Hydrolysis of Ala-|-Gly bond in repressor LexA.. Its function is as follows. Represses a number of genes involved in the response to DNA damage (SOS response), including recA and lexA. In the presence of single-stranded DNA, RecA interacts with LexA causing an autocatalytic cleavage which disrupts the DNA-binding part of LexA, leading to derepression of the SOS regulon and eventually DNA repair. The protein is LexA repressor of Xanthobacter autotrophicus (strain ATCC BAA-1158 / Py2).